Reading from the N-terminus, the 274-residue chain is NADPH-dependent 7-cyano-7-deazaguanine reductase (274 aa).

81-83 (IES) serves as a coordination point for substrate. Residue 83-84 (SK) participates in NADPH binding. Cysteine 182 (thioimide intermediate) is an active-site residue. Catalysis depends on aspartate 189, which acts as the Proton donor. 221 to 222 (HE) provides a ligand contact to substrate. 250-251 (RG) is an NADPH binding site.

This sequence belongs to the GTP cyclohydrolase I family. QueF type 2 subfamily. As to quaternary structure, homodimer.

Its subcellular location is the cytoplasm. It catalyses the reaction 7-aminomethyl-7-carbaguanine + 2 NADP(+) = 7-cyano-7-deazaguanine + 2 NADPH + 3 H(+). The protein operates within tRNA modification; tRNA-queuosine biosynthesis. Functionally, catalyzes the NADPH-dependent reduction of 7-cyano-7-deazaguanine (preQ0) to 7-aminomethyl-7-deazaguanine (preQ1). This chain is NADPH-dependent 7-cyano-7-deazaguanine reductase, found in Hahella chejuensis (strain KCTC 2396).